The following is a 549-amino-acid chain: Glucose-6-phosphate isomerase (549 aa).

Glu352 acts as the Proton donor in catalysis. Active-site residues include His383 and Lys511.

This sequence belongs to the GPI family.

Its subcellular location is the cytoplasm. The catalysed reaction is alpha-D-glucose 6-phosphate = beta-D-fructose 6-phosphate. It functions in the pathway carbohydrate biosynthesis; gluconeogenesis. Its pathway is carbohydrate degradation; glycolysis; D-glyceraldehyde 3-phosphate and glycerone phosphate from D-glucose: step 2/4. In terms of biological role, catalyzes the reversible isomerization of glucose-6-phosphate to fructose-6-phosphate. This chain is Glucose-6-phosphate isomerase, found in Methylocella silvestris (strain DSM 15510 / CIP 108128 / LMG 27833 / NCIMB 13906 / BL2).